Consider the following 75-residue polypeptide: Cruzioseptin-8 (75 aa).

A signal peptide spans 1–22; that stretch reads MAFLKKCLFLVLFLGLVSLSIC. Residues 23-43 constitute a propeptide that is removed on maturation; that stretch reads EEEKREEENEEVQEDDDQSEE. The segment at 25–44 is disordered; the sequence is EKREEENEEVQEDDDQSEEK. Residues 30 to 41 are compositionally biased toward acidic residues; sequence ENEEVQEDDDQS. Glutamine 72 is modified (glutamine amide). Residues 74 to 75 constitute a propeptide that is removed on maturation; it reads EQ.

In terms of tissue distribution, expressed by the skin glands.

It is found in the secreted. Has antimicrobial activity. This is Cruzioseptin-8 from Cruziohyla calcarifer (Splendid leaf frog).